A 574-amino-acid polypeptide reads, in one-letter code: 5'-nucleotidase (574 aa).

A signal peptide spans 1–26 (MNPGAARTPALRILALGALLWPAARP). Zn(2+) is bound by residues Asp36 and His38. Cys51 and Cys57 are joined by a disulfide. An N-linked (GlcNAc...) asparagine glycan is attached at Asn53. Asp85, Asn117, His220, and His243 together coordinate Zn(2+). Residues Asn311 and Asn333 are each glycosylated (N-linked (GlcNAc...) asparagine). Disulfide bonds link Cys353-Cys358 and Cys365-Cys387. Arg354 serves as a coordination point for AMP. Arg354 is a binding site for IMP. AMP-binding residues include Asn390 and Arg395. IMP is bound by residues Asn390 and Arg395. A glycan (N-linked (GlcNAc...) asparagine) is linked at Asn403. Phe417 is an AMP binding site. Position 417 (Phe417) interacts with IMP. Cys476 and Cys479 are joined by a disulfide. Phe500 and Asp506 together coordinate AMP. Positions 500 and 506 each coordinate IMP. Residue Ser549 is the site of GPI-anchor amidated serine attachment. Residues 550–574 (AGSHCCGSFSLIFLSVLAVIIILYQ) constitute a propeptide, removed in mature form.

Belongs to the 5'-nucleotidase family. Homodimer. Zn(2+) is required as a cofactor.

It is found in the cell membrane. The enzyme catalyses a ribonucleoside 5'-phosphate + H2O = a ribonucleoside + phosphate. It catalyses the reaction a 2'-deoxyribonucleoside 5'-phosphate + H2O = a 2'-deoxyribonucleoside + phosphate. It carries out the reaction dTMP + H2O = thymidine + phosphate. The catalysed reaction is CMP + H2O = cytidine + phosphate. The enzyme catalyses IMP + H2O = inosine + phosphate. It catalyses the reaction AMP + H2O = adenosine + phosphate. It carries out the reaction GMP + H2O = guanosine + phosphate. The catalysed reaction is UMP + H2O = uridine + phosphate. The enzyme catalyses dAMP + H2O = 2'-deoxyadenosine + phosphate. It catalyses the reaction dCMP + H2O = 2'-deoxycytidine + phosphate. Functionally, catalyzes the hydrolysis of nucleotide monophosphates, releasing inorganic phosphate and the corresponding nucleoside, with AMP being the preferred substrate. Shows a preference for ribonucleotide monophosphates over their equivalent deoxyribose forms. Other substrates include IMP, UMP, GMP, CMP, dAMP, dCMP, dTMP, NAD and NMN. The polypeptide is 5'-nucleotidase (NT5E) (Bos taurus (Bovine)).